A 417-amino-acid chain; its full sequence is Imidazolonepropionase (417 aa).

Fe(3+)-binding residues include His-77 and His-79. Zn(2+)-binding residues include His-77 and His-79. 4-imidazolone-5-propanoate-binding residues include Arg-86, Tyr-149, and His-182. Tyr-149 is an N-formimidoyl-L-glutamate binding site. Fe(3+) is bound at residue His-247. His-247 serves as a coordination point for Zn(2+). Gln-250 is a binding site for 4-imidazolone-5-propanoate. Asp-322 provides a ligand contact to Fe(3+). Asp-322 lines the Zn(2+) pocket. Residues Asn-324 and Gly-326 each coordinate N-formimidoyl-L-glutamate. Thr-327 is a binding site for 4-imidazolone-5-propanoate.

Belongs to the metallo-dependent hydrolases superfamily. HutI family. The cofactor is Zn(2+). It depends on Fe(3+) as a cofactor.

Its subcellular location is the cytoplasm. It carries out the reaction 4-imidazolone-5-propanoate + H2O = N-formimidoyl-L-glutamate. Its pathway is amino-acid degradation; L-histidine degradation into L-glutamate; N-formimidoyl-L-glutamate from L-histidine: step 3/3. In terms of biological role, catalyzes the hydrolytic cleavage of the carbon-nitrogen bond in imidazolone-5-propanoate to yield N-formimidoyl-L-glutamate. It is the third step in the universal histidine degradation pathway. The chain is Imidazolonepropionase from Cupriavidus taiwanensis (strain DSM 17343 / BCRC 17206 / CCUG 44338 / CIP 107171 / LMG 19424 / R1) (Ralstonia taiwanensis (strain LMG 19424)).